The chain runs to 77 residues: Small ribosomal subunit protein bS18 (77 aa).

This sequence belongs to the bacterial ribosomal protein bS18 family. Part of the 30S ribosomal subunit. Forms a tight heterodimer with protein bS6.

Its function is as follows. Binds as a heterodimer with protein bS6 to the central domain of the 16S rRNA, where it helps stabilize the platform of the 30S subunit. The polypeptide is Small ribosomal subunit protein bS18 (Shouchella clausii (strain KSM-K16) (Alkalihalobacillus clausii)).